A 568-amino-acid chain; its full sequence is Archaeosine synthase subunit alpha (568 aa).

The PUA domain maps to 496 to 565 (YDALKSYWVK…AKKGVAVKVR (70 aa)).

It belongs to the archaeosine synthase type 1 family. As to quaternary structure, forms a robust complex with the archaeosine synthase beta subunit RaSEA, likely an alpha(2)beta(2) heterotetrameric structure. Formation of this complex highly increases lysine transfer activity.

The enzyme catalyses 7-cyano-7-carbaguanosine(15) in tRNA + L-lysine = 7-N-[(5S)-5-amino-5-carboxypentyl]formamidino-7-deazaguanosine(15) in tRNA. It participates in tRNA modification; archaeosine-tRNA biosynthesis. Functionally, functions in the biosynthesis of archaeosine, a modified nucleoside present in the dihydrouridine loop (D-loop) of archaeal tRNAs. Catalyzes the addition of L-lysine to the cyano group of 7-cyano-7-deazaguanine (preQ0)-modified tRNAs at position 15, to generate q0kN15-tRNA, a q0N lysine adduct identified as 7-N-[(5S)-5-amino-5-carboxypentyl]formamidino-7-deazaguanosine. The chain is Archaeosine synthase subunit alpha from Thermococcus kodakarensis (strain ATCC BAA-918 / JCM 12380 / KOD1) (Pyrococcus kodakaraensis (strain KOD1)).